A 289-amino-acid polypeptide reads, in one-letter code: ATP synthase gamma chain (289 aa).

It belongs to the ATPase gamma chain family. As to quaternary structure, F-type ATPases have 2 components, CF(1) - the catalytic core - and CF(0) - the membrane proton channel. CF(1) has five subunits: alpha(3), beta(3), gamma(1), delta(1), epsilon(1). CF(0) has three main subunits: a, b and c.

It is found in the cell membrane. Functionally, produces ATP from ADP in the presence of a proton gradient across the membrane. The gamma chain is believed to be important in regulating ATPase activity and the flow of protons through the CF(0) complex. In Lactococcus lactis subsp. cremoris (strain MG1363), this protein is ATP synthase gamma chain.